The chain runs to 509 residues: Tyrosine-protein phosphatase non-receptor type substrate 1 (509 aa).

Residues 1–31 (MEPAGPAPGRLGPLLFCLLLSASCFCAGASG) form the signal peptide. The region spanning 32–138 (KELKVTQADK…IVEPDTEIKS (107 aa)) is the Ig-like V-type domain. At 32 to 373 (KELKVTQADK…PDNNAYYNWN (342 aa)) the chain is on the extracellular side. N-linked (GlcNAc...) asparagine glycans are attached at residues Asn-54, Asn-93, Asn-169, Asn-181, Asn-205, Asn-209, Asn-242, Asn-246, Asn-271, Asn-293, Asn-312, Asn-320, and Asn-345. Cysteines 55 and 122 form a disulfide. 2 Ig-like C1-type domains span residues 150-248 (PSSP…ANFS) and 255-349 (PTLK…HTVR). Cys-172 and Cys-229 form a disulfide bridge. An intrachain disulfide couples Cys-274 to Cys-332. The helical transmembrane segment at 374-394 (VFIGVGVACALLVVLLMAALY) threads the bilayer. At 395–509 (LLRIKQKKAK…EYASVQVQRK (115 aa)) the chain is on the cytoplasmic side. A Phosphotyrosine; by Tyr-kinases modification is found at Tyr-436. Residues 436–439 (YADL) carry the SH2-binding motif. Residues 441-472 (LPKEKKPAPRVPEPNNHTEYASIETGKLPRPE) form a disordered region. The SH3-binding motif lies at 446–451 (KPAPRV). A phosphotyrosine; by Tyr-kinases mark is found at Tyr-460, Tyr-477, and Tyr-501. 3 short sequence motifs (SH2-binding) span residues 460–463 (YASI), 477–480 (YADL), and 501–504 (YASV). The interval 485-509 (LNRAQPTPKPEPSFSEYASVQVQRK) is disordered. Polar residues predominate over residues 500–509 (EYASVQVQRK).

As to quaternary structure, binds PTPN11 when tyrosine-phosphorylated, except in macrophages, where it primarily binds PTPN6. Binds GRB2 in vitro. Binds FGR. Binds JAK2 irrespective of its phosphorylation status and forms a stable complex. Binds SCAP1 and/or SCAP2. The resulting complex recruits FYB1. Binds PTK2B. Interacts with TRIM2. N-glycosylated. In terms of processing, phosphorylated on tyrosine residues in response to insulin, cell adhesion or epidermal growth factors. Dephosphorylated by PTPN11. As to expression, highly expressed in brain, spleen, lung, liver and kidney. Detected at lower levels in heart. Highly expressed in alveolar and peritoneal macrophages, and at lower levels in dendritic cells.

The protein localises to the membrane. Functionally, immunoglobulin-like cell surface receptor for CD47. Acts as docking protein and induces translocation of PTPN6, PTPN11 and other binding partners from the cytosol to the plasma membrane. Supports adhesion of cerebellar neurons, neurite outgrowth and glial cell attachment. May play a key role in intracellular signaling during synaptogenesis and in synaptic function. Involved in the negative regulation of receptor tyrosine kinase-coupled cellular responses induced by cell adhesion, growth factors or insulin. Mediates negative regulation of phagocytosis, mast cell activation and dendritic cell activation. CD47 binding prevents maturation of immature dendritic cells and inhibits cytokine production by mature dendritic cells. Plays a role in antiviral immunity and limits new world arenavirus infection by decreasing virus internalization. Receptor for THBS1. Interaction with THBS1 stimulates phosphorylation of SIRPA. In response to THBS1, involved in ROS signaling in non-phagocytic cells, stimulating NADPH oxidase-derived ROS production. This is Tyrosine-protein phosphatase non-receptor type substrate 1 (Sirpa) from Rattus norvegicus (Rat).